A 422-amino-acid polypeptide reads, in one-letter code: Serine--tRNA ligase (422 aa).

230 to 232 provides a ligand contact to L-serine; sequence TAE. Residue 261-263 coordinates ATP; the sequence is RNE. Glu284 is an L-serine binding site. 347 to 350 is an ATP binding site; it reads EVSS. Residue Ser383 coordinates L-serine.

This sequence belongs to the class-II aminoacyl-tRNA synthetase family. Type-1 seryl-tRNA synthetase subfamily. Homodimer. The tRNA molecule binds across the dimer.

The protein localises to the cytoplasm. The catalysed reaction is tRNA(Ser) + L-serine + ATP = L-seryl-tRNA(Ser) + AMP + diphosphate + H(+). The enzyme catalyses tRNA(Sec) + L-serine + ATP = L-seryl-tRNA(Sec) + AMP + diphosphate + H(+). Its pathway is aminoacyl-tRNA biosynthesis; selenocysteinyl-tRNA(Sec) biosynthesis; L-seryl-tRNA(Sec) from L-serine and tRNA(Sec): step 1/1. Its function is as follows. Catalyzes the attachment of serine to tRNA(Ser). Is also able to aminoacylate tRNA(Sec) with serine, to form the misacylated tRNA L-seryl-tRNA(Sec), which will be further converted into selenocysteinyl-tRNA(Sec). The sequence is that of Serine--tRNA ligase from Herpetosiphon aurantiacus (strain ATCC 23779 / DSM 785 / 114-95).